Consider the following 303-residue polypeptide: Endo-1,3;1,4-beta-D-glucanase (303 aa).

An N-terminal signal peptide occupies residues 1–43; the sequence is MPSSAQVLLCLAAVLAAAAATTAEAHSQCLDNPPDRSIHGRQL. N-linked (GlcNAc...) asparagine glycosylation is found at Asn-115, Asn-197, and Asn-257.

Post-translationally, glycosylated.

The protein resides in the secreted. Functionally, plays a role in control of plant growth. Mediates specific degradation of cell wall (1,3)(1,4)-beta-D-glucans and is related to auxin-mediated growth and development of cereal coleoptiles. The chain is Endo-1,3;1,4-beta-D-glucanase from Zea mays (Maize).